Reading from the N-terminus, the 164-residue chain is Protein-export protein SecB (164 aa).

It belongs to the SecB family. Homotetramer, a dimer of dimers. One homotetramer interacts with 1 SecA dimer.

The protein localises to the cytoplasm. Its function is as follows. One of the proteins required for the normal export of preproteins out of the cell cytoplasm. It is a molecular chaperone that binds to a subset of precursor proteins, maintaining them in a translocation-competent state. It also specifically binds to its receptor SecA. The chain is Protein-export protein SecB from Caulobacter sp. (strain K31).